The primary structure comprises 219 residues: UPF0502 protein Ppro_2903 (219 aa).

This sequence belongs to the UPF0502 family.

The sequence is that of UPF0502 protein Ppro_2903 from Pelobacter propionicus (strain DSM 2379 / NBRC 103807 / OttBd1).